We begin with the raw amino-acid sequence, 510 residues long: Hepatic triacylglycerol lipase (510 aa).

A signal peptide spans 1 to 21 (MGNPLQISIFLVFCIFIQSSA). N-linked (GlcNAc...) asparagine glycosylation occurs at N79. Catalysis depends on S169, which acts as the Nucleophile. D195 serves as the catalytic Charge relay system. Residues 255–278 (CHFLELYKHIAEHGLNAITQTIKC) form an essential for determining substrate specificity region. H280 functions as the Charge relay system in the catalytic mechanism. The 135-residue stretch at 353 to 487 (YHYQFKIQFI…HPSQEKVFVN (135 aa)) folds into the PLAT domain. N-linked (GlcNAc...) asparagine glycosylation occurs at N398.

This sequence belongs to the AB hydrolase superfamily. Lipase family. As to quaternary structure, homodimer.

The protein localises to the secreted. The catalysed reaction is a triacylglycerol + H2O = a diacylglycerol + a fatty acid + H(+). The enzyme catalyses a 1-acyl-sn-glycero-3-phosphocholine + H2O = sn-glycerol 3-phosphocholine + a fatty acid + H(+). It carries out the reaction a 1,2-diacyl-sn-glycero-3-phosphocholine + H2O = a 2-acyl-sn-glycero-3-phosphocholine + a fatty acid + H(+). It catalyses the reaction 1,2,3-tri-(9Z-octadecenoyl)-glycerol + H2O = di-(9Z)-octadecenoylglycerol + (9Z)-octadecenoate + H(+). The catalysed reaction is 1,2-di-(9Z-octadecenoyl)-sn-glycero-3-phosphocholine + H2O = (9Z-octadecenoyl)-sn-glycero-3-phosphocholine + (9Z)-octadecenoate + H(+). The enzyme catalyses 1,2,3-tributanoylglycerol + H2O = dibutanoylglycerol + butanoate + H(+). It carries out the reaction 1,2-dihexadecanoyl-sn-glycero-3-phosphocholine + H2O = hexadecanoyl-sn-glycero-3-phosphocholine + hexadecanoate + H(+). It catalyses the reaction 1,2-di-(9Z-octadecenoyl)-sn-glycerol + H2O = 2-(9Z-octadecenoyl)-glycerol + (9Z)-octadecenoate + H(+). The catalysed reaction is 1,2,3-tri-(9Z-octadecenoyl)-glycerol + H2O = 2,3-di-(9Z)-octadecenoyl-sn-glycerol + (9Z)-octadecenoate + H(+). The enzyme catalyses 1-(9Z-octadecenoyl)-sn-glycero-3-phospho-L-serine + H2O = sn-glycero-3-phospho-L-serine + (9Z)-octadecenoate + H(+). It carries out the reaction 1-hexadecanoyl-sn-glycero-3-phosphocholine + H2O = sn-glycerol 3-phosphocholine + hexadecanoate + H(+). It catalyses the reaction 1,3-di-(9Z-octadecenoyl)-glycerol + H2O = 3-(9Z-octadecenoyl)-sn-glycerol + (9Z)-octadecenoate + H(+). Its function is as follows. Catalyzes the hydrolysis of triglycerides and phospholipids present in circulating plasma lipoproteins, including chylomicrons, intermediate density lipoproteins (IDL), low density lipoproteins (LDL) of large size and high density lipoproteins (HDL), releasing free fatty acids (FFA) and smaller lipoprotein particles. Also exhibits lysophospholipase activity. Can hydrolyze both neutral lipid and phospholipid substrates but shows a greater binding affinity for neutral lipid substrates than phospholipid substrates. In native LDL, preferentially hydrolyzes the phosphatidylcholine species containing polyunsaturated fatty acids at sn-2 position. In Mus musculus (Mouse), this protein is Hepatic triacylglycerol lipase (Lipc).